The primary structure comprises 427 residues: G2/mitotic-specific cyclin-3 (427 aa).

The segment covering 1 to 12 (MHHNSQSLSSGH) has biased composition (polar residues). Disordered regions lie at residues 1-29 (MHHN…NLKH) and 89-126 (SVAQ…EDQE). Basic and acidic residues predominate over residues 89–105 (SVAQRKEADHNDLLTDR). Residues 106 to 126 (EQEEPVEDDGESEEDEEEDQE) show a composition bias toward acidic residues.

It belongs to the cyclin family. Cyclin AB subfamily.

Essential for the control of the cell cycle at the G2/M (mitosis) transition. Interacts with the CDC2 protein kinase to form MPF. G2/M cyclins accumulate steadily during G2 and are abruptly destroyed at mitosis. This Saccharomyces cerevisiae (strain ATCC 204508 / S288c) (Baker's yeast) protein is G2/mitotic-specific cyclin-3 (CLB3).